Consider the following 175-residue polypeptide: Photosynthetic NDH subunit of subcomplex B 4, chloroplastic (175 aa).

The N-terminal 24 residues, 1 to 24 (MAEAFTSFTFTNLHIPSSYNHSPK), are a transit peptide targeting the chloroplast. The chain crosses the membrane as a helical span at residues 95–111 (VYMFYIMFTCWGCLYFG).

Part of the chloroplast NDH complex, composed of a mixture of chloroplast and nucleus encoded subunits. Component of the NDH subcomplex B, at least composed of PnsB1, PnsB2, PnsB3, PnsB4 and PnsB5.

It is found in the plastid. Its subcellular location is the chloroplast thylakoid membrane. NDH shuttles electrons from NAD(P)H:plastoquinone, via FMN and iron-sulfur (Fe-S) centers, to quinones in the photosynthetic chain and possibly in a chloroplast respiratory chain. The immediate electron acceptor for the enzyme in this species is believed to be plastoquinone. Couples the redox reaction to proton translocation, and thus conserves the redox energy in a proton gradient. The polypeptide is Photosynthetic NDH subunit of subcomplex B 4, chloroplastic (Arabidopsis thaliana (Mouse-ear cress)).